We begin with the raw amino-acid sequence, 155 residues long: Ribosomal RNA large subunit methyltransferase H (155 aa).

Residues Leu-72, Gly-103, and 122–127 each bind S-adenosyl-L-methionine; that span reads LSPLTL.

This sequence belongs to the RNA methyltransferase RlmH family. In terms of assembly, homodimer.

It localises to the cytoplasm. It catalyses the reaction pseudouridine(1915) in 23S rRNA + S-adenosyl-L-methionine = N(3)-methylpseudouridine(1915) in 23S rRNA + S-adenosyl-L-homocysteine + H(+). Functionally, specifically methylates the pseudouridine at position 1915 (m3Psi1915) in 23S rRNA. This is Ribosomal RNA large subunit methyltransferase H from Histophilus somni (strain 129Pt) (Haemophilus somnus).